Reading from the N-terminus, the 157-residue chain is SsrA-binding protein (157 aa).

The interval 133-157 (LHDKRESEKKRDWGREKGRLLRARG) is disordered. The segment covering 135–151 (DKRESEKKRDWGREKGR) has biased composition (basic and acidic residues).

This sequence belongs to the SmpB family.

It is found in the cytoplasm. Functionally, required for rescue of stalled ribosomes mediated by trans-translation. Binds to transfer-messenger RNA (tmRNA), required for stable association of tmRNA with ribosomes. tmRNA and SmpB together mimic tRNA shape, replacing the anticodon stem-loop with SmpB. tmRNA is encoded by the ssrA gene; the 2 termini fold to resemble tRNA(Ala) and it encodes a 'tag peptide', a short internal open reading frame. During trans-translation Ala-aminoacylated tmRNA acts like a tRNA, entering the A-site of stalled ribosomes, displacing the stalled mRNA. The ribosome then switches to translate the ORF on the tmRNA; the nascent peptide is terminated with the 'tag peptide' encoded by the tmRNA and targeted for degradation. The ribosome is freed to recommence translation, which seems to be the essential function of trans-translation. This is SsrA-binding protein from Nitrobacter winogradskyi (strain ATCC 25391 / DSM 10237 / CIP 104748 / NCIMB 11846 / Nb-255).